Consider the following 68-residue polypeptide: Large ribosomal subunit protein bL31 (68 aa).

This sequence belongs to the bacterial ribosomal protein bL31 family. Type A subfamily. As to quaternary structure, part of the 50S ribosomal subunit.

Its function is as follows. Binds the 23S rRNA. The polypeptide is Large ribosomal subunit protein bL31 (Helicobacter hepaticus (strain ATCC 51449 / 3B1)).